A 526-amino-acid polypeptide reads, in one-letter code: Alpha-1,3-mannosyl-glycoprotein 4-beta-N-acetylglucosaminyltransferase A (526 aa).

Over 1–6 (MRLRNG) the chain is Cytoplasmic. The chain crosses the membrane as a helical; Signal-anchor for type II membrane protein span at residues 7 to 27 (TVATALVFVTSFLTLSWYTTW). Residues 28–63 (QNGKEKLIAYQREFLALKERLRVAEHRISQRSSELN) adopt a coiled-coil conformation. Residues 28-526 (QNGKEKLIAY…NEIHIKKVTS (499 aa)) lie on the Lumenal side of the membrane. Residue asparagine 449 is glycosylated (N-linked (GlcNAc...) asparagine). Serine 465 carries the phosphoserine modification.

The protein belongs to the glycosyltransferase 54 family. A divalent metal cation serves as cofactor. Post-translationally, N-glycosylated.

It localises to the golgi apparatus membrane. Its subcellular location is the secreted. The catalysed reaction is N(4)-{beta-D-GlcNAc-(1-&gt;2)-alpha-D-Man-(1-&gt;3)-[beta-D-GlcNAc-(1-&gt;2)-alpha-D-Man-(1-&gt;6)]-beta-D-Man-(1-&gt;4)-beta-D-GlcNAc-(1-&gt;4)-beta-D-GlcNAc}-L-asparaginyl-[protein] + UDP-N-acetyl-alpha-D-glucosamine = N(4)-{beta-D-GlcNAc-(1-&gt;2)-[beta-D-GlcNAc-(1-&gt;4)]-alpha-D-Man-(1-&gt;3)-[beta-D-GlcNAc-(1-&gt;2)-alpha-D-Man-(1-&gt;6)]-beta-D-Man-(1-&gt;4)-beta-D-GlcNAc-(1-&gt;4)-beta-D-GlcNAc}-L-asparaginyl-[protein] + UDP + H(+). It carries out the reaction an N(4)-{beta-D-GlcNAc-(1-&gt;2)-alpha-D-Man-(1-&gt;3)-[alpha-D-Man-(1-&gt;6)]-beta-D-Man-(1-&gt;4)-beta-D-GlcNAc-(1-&gt;4)-beta-D-GlcNAc}-L-asparaginyl-[protein] + UDP-N-acetyl-alpha-D-glucosamine = an N(4)-{beta-D-GlcNAc-(1-&gt;2)-[beta-D-GlcNAc-(1-&gt;4)]-alpha-D-Man-(1-&gt;3)-[alpha-D-Man-(1-&gt;6)]-beta-D-Man-(1-&gt;4)-beta-D-GlcNAc-(1-&gt;4)-beta-D-GlcNAc}-L-asparaginyl-[protein] + UDP + H(+). It catalyses the reaction an N(4)-{beta-D-GlcNAc-(1-&gt;2)-alpha-D-Man-(1-&gt;3)-[beta-D-GlcNAc-(1-&gt;2)-[beta-D-GlcNAc-(1-&gt;6)]-alpha-D-Man-(1-&gt;6)]-beta-D-Man-(1-&gt;4)-beta-D-GlcNAc-(1-&gt;4)-beta-D-GlcNAc}-L-asparaginyl-[protein] + UDP-N-acetyl-alpha-D-glucosamine = an N(4)-{beta-D-GlcNAc-(1-&gt;2)-[beta-D-GlcNAc-(1-&gt;4)]-alpha-D-Man-(1-&gt;3)-[beta-D-GlcNAc-(1-&gt;2)-[beta-D-GlcNAc-(1-&gt;6)]-alpha-D-Man-(1-&gt;6)]-beta-D-Man-(1-&gt;4)-beta-D-GlcNAc-(1-&gt;4)-beta-D-GlcNAc}-L-asparaginyl-[protein] + UDP + H(+). The enzyme catalyses an N(4)-{beta-D-GlcNAc-(1-&gt;2)-alpha-D-Man-(1-&gt;3)-[beta-D-GlcNAc-(1-&gt;2)-alpha-D-Man-(1-&gt;6)]-beta-D-Man-(1-&gt;4)-beta-D-GlcNAc-(1-&gt;4)-[alpha-L-Fuc-(1-&gt;6)]-beta-D-GlcNAc}-L-asparaginyl-[protein] + UDP-N-acetyl-alpha-D-glucosamine = N(4)-{beta-D-GlcNAc-(1-&gt;2)-[beta-D-GlcNAc-(1-&gt;4)]-alpha-D-Man-(1-&gt;3)-[beta-D-GlcNAc-(1-&gt;2)-alpha-D-Man-(1-&gt;6)]-beta-D-Man-(1-&gt;4)-beta-D-GlcNAc-(1-&gt;4)-[alpha-L-Fuc-(1-&gt;6)]-beta-D-GlcNAc}-asparaginyl-[protein] + UDP + H(+). The catalysed reaction is an N(4)-{beta-D-GlcNAc-(1-&gt;2)-alpha-D-Man-(1-&gt;3)-[beta-D-Gal-(1-&gt;4)-beta-D-GlcNAc-(1-&gt;2)-alpha-D-Man-(1-&gt;6)]-beta-D-Man-(1-&gt;4)-beta-D-GlcNAc-(1-&gt;4)-beta-D-GlcNAc}-L-asparaginyl-[protein] + UDP-N-acetyl-alpha-D-glucosamine = an N(4)-{beta-D-GlcNAc-(1-&gt;2)-[beta-D-GlcNAc-(1-&gt;4)]-alpha-D-Man-(1-&gt;3)-[beta-D-Gal-(1-&gt;4)-beta-D-GlcNAc-(1-&gt;2)-alpha-D-Man-(1-&gt;6)]-beta-D-Man-(1-&gt;4)-beta-D-GlcNAc-(1-&gt;4)-beta-D-GlcNAc}-L-asparaginyl-[protein] + UDP + H(+). It carries out the reaction N(4)-{beta-D-GlcNAc-(1-&gt;2)-alpha-D-Man-(1-&gt;3)-[alpha-D-Man-(1-&gt;3)-{alpha-D-Man-(1-&gt;6)}-alpha-D-Man-(1-&gt;6)]-beta-D-Man-(1-&gt;4)-beta-D-GlcNAc-(1-&gt;4)-beta-D-GlcNAc}-asparaginyl-[protein] + UDP-N-acetyl-alpha-D-glucosamine = N(4)-{beta-D-GlcNAc-(1-&gt;2)-[beta-D-GlcNAc-(1-&gt;4)]-alpha-D-Man-(1-&gt;3)-[alpha-D-Man-(1-&gt;3)-{alpha-D-Man-(1-&gt;6)}-alpha-D-Man-(1-&gt;6)]-beta-D-Man-(1-&gt;4)-beta-D-GlcNAc-(1-&gt;4)-beta-D-GlcNAc}-asparaginyl-[protein] + UDP + H(+). It catalyses the reaction N(4)-{beta-D-GlcNAc-(1-&gt;2)-alpha-D-Man-(1-&gt;3)-beta-D-Man-(1-&gt;4)-beta-D-GlcNAc-(1-&gt;4)-beta-D-GlcNAc}-asparaginyl-[protein] + UDP-N-acetyl-alpha-D-glucosamine = N(4)-{beta-D-GlcNAc-(1-&gt;2)-[beta-D-GlcNAc-(1-&gt;4)]-alpha-D-Man-(1-&gt;3)-beta-D-Man-(1-&gt;4)-beta-D-GlcNAc-(1-&gt;4)-beta-D-GlcNAc}-asparaginyl-[protein] + UDP + H(+). It functions in the pathway protein modification; protein glycosylation. Its activity is regulated as follows. Inhibited by UDP. Its function is as follows. Glycosyltransferase that catalyze the transfer of GlcNAc from UDP-GlcNAc to the GlcNAcbeta1-2Manalpha1-3 arm of the core structure of N-linked glycans through a beta1-4 linkage and participates in the production of tri- and tetra-antennary N-linked sugar chains. Involved in glucose transport by mediating SLC2A2/GLUT2 glycosylation, thereby controlling cell-surface expression of SLC2A2 in pancreatic beta cells. The sequence is that of Alpha-1,3-mannosyl-glycoprotein 4-beta-N-acetylglucosaminyltransferase A from Rattus norvegicus (Rat).